A 589-amino-acid polypeptide reads, in one-letter code: Peroxisomal biogenesis factor 8 (589 aa).

Residues 587–589 carry the Microbody targeting signal motif; it reads SKL.

Its subcellular location is the peroxisome matrix. Its function is as follows. Required for peroxisome assembly. The sequence is that of Peroxisomal biogenesis factor 8 (PEX8) from Saccharomyces cerevisiae (strain ATCC 204508 / S288c) (Baker's yeast).